Here is a 637-residue protein sequence, read N- to C-terminus: Threonine--tRNA ligase (637 aa).

Residues 1–61 (MLNITLPDGS…VEDSAVQIIT (61 aa)) form the TGS domain. A catalytic region spans residues 242 to 533 (DHRKLGKQLD…LIENHAGSFP (292 aa)). Zn(2+) is bound by residues Cys-333, His-384, and His-510.

Belongs to the class-II aminoacyl-tRNA synthetase family. Homodimer. Requires Zn(2+) as cofactor.

The protein localises to the cytoplasm. It catalyses the reaction tRNA(Thr) + L-threonine + ATP = L-threonyl-tRNA(Thr) + AMP + diphosphate + H(+). Catalyzes the attachment of threonine to tRNA(Thr) in a two-step reaction: L-threonine is first activated by ATP to form Thr-AMP and then transferred to the acceptor end of tRNA(Thr). Also edits incorrectly charged L-seryl-tRNA(Thr). The polypeptide is Threonine--tRNA ligase (Neisseria meningitidis serogroup B (strain ATCC BAA-335 / MC58)).